The sequence spans 289 residues: Elongation factor Ts (289 aa).

Residues 80 to 83 form an involved in Mg(2+) ion dislocation from EF-Tu region; it reads TDFV.

Belongs to the EF-Ts family.

Its subcellular location is the cytoplasm. In terms of biological role, associates with the EF-Tu.GDP complex and induces the exchange of GDP to GTP. It remains bound to the aminoacyl-tRNA.EF-Tu.GTP complex up to the GTP hydrolysis stage on the ribosome. This is Elongation factor Ts from Francisella tularensis subsp. tularensis (strain FSC 198).